We begin with the raw amino-acid sequence, 150 residues long: UPF0260 protein CGSHiGG_00425 (150 aa).

It belongs to the UPF0260 family.

The protein is UPF0260 protein CGSHiGG_00425 of Haemophilus influenzae (strain PittGG).